The sequence spans 295 residues: Glutamyl-Q tRNA(Asp) synthetase (295 aa).

L-glutamate-binding positions include 9 to 13 (RFAPT) and E45. The 'HIGH' region motif lies at 12 to 22 (PTPSGYLHFGS). 4 residues coordinate Zn(2+): C101, C103, Y115, and C119. L-glutamate-binding residues include Y172 and R190. The 'KMSKS' region signature appears at 228–232 (KLGKS). Position 231 (K231) interacts with ATP.

Belongs to the class-I aminoacyl-tRNA synthetase family. GluQ subfamily. The cofactor is Zn(2+).

Its function is as follows. Catalyzes the tRNA-independent activation of glutamate in presence of ATP and the subsequent transfer of glutamate onto a tRNA(Asp). Glutamate is transferred on the 2-amino-5-(4,5-dihydroxy-2-cyclopenten-1-yl) moiety of the queuosine in the wobble position of the QUC anticodon. The polypeptide is Glutamyl-Q tRNA(Asp) synthetase (Pseudomonas syringae pv. syringae (strain B728a)).